The following is a 268-amino-acid chain: Glutamate racemase (268 aa).

Residues 10–11 (DS) and 42–43 (YG) each bind substrate. C73 acts as the Proton donor/acceptor in catalysis. 74-75 (NT) is a substrate binding site. C184 serves as the catalytic Proton donor/acceptor. Residue 185 to 186 (TH) coordinates substrate.

This sequence belongs to the aspartate/glutamate racemases family.

It catalyses the reaction L-glutamate = D-glutamate. It participates in cell wall biogenesis; peptidoglycan biosynthesis. Provides the (R)-glutamate required for cell wall biosynthesis. This Carnobacterium sp. (strain St2) protein is Glutamate racemase.